The sequence spans 361 residues: Biotin synthase (361 aa).

The Radical SAM core domain occupies 83-308 (PEVEVEGIIS…RTILRYAGGR (226 aa)). Residues cysteine 98, cysteine 102, and cysteine 105 each coordinate [4Fe-4S] cluster. Positions 141, 174, 233, and 303 each coordinate [2Fe-2S] cluster.

This sequence belongs to the radical SAM superfamily. Biotin synthase family. Homodimer. Requires [4Fe-4S] cluster as cofactor. [2Fe-2S] cluster serves as cofactor.

The enzyme catalyses (4R,5S)-dethiobiotin + (sulfur carrier)-SH + 2 reduced [2Fe-2S]-[ferredoxin] + 2 S-adenosyl-L-methionine = (sulfur carrier)-H + biotin + 2 5'-deoxyadenosine + 2 L-methionine + 2 oxidized [2Fe-2S]-[ferredoxin]. The protein operates within cofactor biosynthesis; biotin biosynthesis; biotin from 7,8-diaminononanoate: step 2/2. In terms of biological role, catalyzes the conversion of dethiobiotin (DTB) to biotin by the insertion of a sulfur atom into dethiobiotin via a radical-based mechanism. The sequence is that of Biotin synthase from Parafrankia sp. (strain EAN1pec).